The primary structure comprises 250 residues: Ribosomal RNA small subunit methyltransferase J (250 aa).

S-adenosyl-L-methionine-binding positions include Arg-101 to Asp-102, Glu-117 to Arg-118, Ser-153 to Ser-154, and Asp-171.

The protein belongs to the methyltransferase superfamily. RsmJ family.

The protein resides in the cytoplasm. It catalyses the reaction guanosine(1516) in 16S rRNA + S-adenosyl-L-methionine = N(2)-methylguanosine(1516) in 16S rRNA + S-adenosyl-L-homocysteine + H(+). Its function is as follows. Specifically methylates the guanosine in position 1516 of 16S rRNA. This is Ribosomal RNA small subunit methyltransferase J from Klebsiella pneumoniae (strain 342).